Here is a 435-residue protein sequence, read N- to C-terminus: Methylenetetrahydrofolate--tRNA-(uracil-5-)-methyltransferase TrmFO (435 aa).

Position 9–14 (9–14 (GAGLAG)) interacts with FAD.

The protein belongs to the MnmG family. TrmFO subfamily. It depends on FAD as a cofactor.

It localises to the cytoplasm. It catalyses the reaction uridine(54) in tRNA + (6R)-5,10-methylene-5,6,7,8-tetrahydrofolate + NADH + H(+) = 5-methyluridine(54) in tRNA + (6S)-5,6,7,8-tetrahydrofolate + NAD(+). The enzyme catalyses uridine(54) in tRNA + (6R)-5,10-methylene-5,6,7,8-tetrahydrofolate + NADPH + H(+) = 5-methyluridine(54) in tRNA + (6S)-5,6,7,8-tetrahydrofolate + NADP(+). In terms of biological role, catalyzes the folate-dependent formation of 5-methyl-uridine at position 54 (M-5-U54) in all tRNAs. The sequence is that of Methylenetetrahydrofolate--tRNA-(uracil-5-)-methyltransferase TrmFO from Staphylococcus saprophyticus subsp. saprophyticus (strain ATCC 15305 / DSM 20229 / NCIMB 8711 / NCTC 7292 / S-41).